The following is a 245-amino-acid chain: Pyridoxine 5'-phosphate synthase (245 aa).

Asparagine 7 is a binding site for 3-amino-2-oxopropyl phosphate. 1-deoxy-D-xylulose 5-phosphate is bound at residue 9–10; sequence DH. Arginine 18 provides a ligand contact to 3-amino-2-oxopropyl phosphate. The active-site Proton acceptor is the histidine 43. Residues arginine 45 and histidine 50 each coordinate 1-deoxy-D-xylulose 5-phosphate. The Proton acceptor role is filled by glutamate 70. Threonine 100 serves as a coordination point for 1-deoxy-D-xylulose 5-phosphate. Catalysis depends on histidine 190, which acts as the Proton donor. Residues glycine 191 and 212 to 213 each bind 3-amino-2-oxopropyl phosphate; that span reads GH.

Belongs to the PNP synthase family. Homooctamer; tetramer of dimers.

It localises to the cytoplasm. It catalyses the reaction 3-amino-2-oxopropyl phosphate + 1-deoxy-D-xylulose 5-phosphate = pyridoxine 5'-phosphate + phosphate + 2 H2O + H(+). The protein operates within cofactor biosynthesis; pyridoxine 5'-phosphate biosynthesis; pyridoxine 5'-phosphate from D-erythrose 4-phosphate: step 5/5. Catalyzes the complicated ring closure reaction between the two acyclic compounds 1-deoxy-D-xylulose-5-phosphate (DXP) and 3-amino-2-oxopropyl phosphate (1-amino-acetone-3-phosphate or AAP) to form pyridoxine 5'-phosphate (PNP) and inorganic phosphate. The sequence is that of Pyridoxine 5'-phosphate synthase from Prochlorococcus marinus (strain MIT 9313).